Consider the following 398-residue polypeptide: Acetate kinase (398 aa).

Asparagine 10 is a binding site for Mg(2+). Lysine 17 contacts ATP. A substrate-binding site is contributed by arginine 91. Catalysis depends on aspartate 148, which acts as the Proton donor/acceptor. ATP is bound by residues 208 to 212 (HLGNG), 283 to 285 (DCR), and 331 to 335 (GIGEN). Glutamate 385 serves as a coordination point for Mg(2+).

This sequence belongs to the acetokinase family. Homodimer. Mg(2+) serves as cofactor. It depends on Mn(2+) as a cofactor.

The protein resides in the cytoplasm. The enzyme catalyses acetate + ATP = acetyl phosphate + ADP. It functions in the pathway metabolic intermediate biosynthesis; acetyl-CoA biosynthesis; acetyl-CoA from acetate: step 1/2. Catalyzes the formation of acetyl phosphate from acetate and ATP. Can also catalyze the reverse reaction. The chain is Acetate kinase from Shewanella pealeana (strain ATCC 700345 / ANG-SQ1).